A 120-amino-acid chain; its full sequence is Natriuretic peptide (120 aa).

Residues 1–25 (MVGLSRLADGGLLLVLALLPLALDG) form the signal peptide. Positions 26–70 (KPAPLEKAPMAPARIIPYLRPVGKESRAALDRMVPPEDGDSRRLE) are excised as a propeptide. C81 and C97 are disulfide-bonded. The propeptide occupies 110–120 (ILPYLRPIRKE).

This sequence belongs to the natriuretic peptide family. Expressed by the venom gland.

Its subcellular location is the secreted. In terms of biological role, natriuretic peptide that dose-dependently induces the rapid relaxation of rat aortic strips phenylephrine-precontracted. Acts by stimulating cGMP production in a dose-dependent manner (by probably activating NPR1 and/or NPR2). May also show potent hypotensive effects. The sequence is that of Natriuretic peptide from Micrurus altirostris (Uruguayan coral snake).